The primary structure comprises 212 residues: UPF0502 protein ECA2523 (212 aa).

It belongs to the UPF0502 family.

The polypeptide is UPF0502 protein ECA2523 (Pectobacterium atrosepticum (strain SCRI 1043 / ATCC BAA-672) (Erwinia carotovora subsp. atroseptica)).